Reading from the N-terminus, the 511-residue chain is MDNYTVLRVIGQGSFGRALLVLQESSNQTFAMKEIRLLKSDTQTSRKEAVLLAKMKHPNIVAFKESFEAEGYLYIVMEYCDGGDLMQRIKQQKGKLFPEDTILNWFIQICLGVNHIHKRRVLHRDIKSKNVFLTHNGKVKLGDFGSARLLSSPMAFACTYVGTPYYVPPEIWENLPYNNKSDIWSLGCILYELCALKHPFQANSWKNLILKICQGPIHPLPALYSCKLQGLVKQMLKRNPSHRPSATTLLCRGSLAPLVPKCLPPQIIREYGEQILDEIKISTPKNMKKQDSNRVRRALGEANSASMQEEERGRKCSHTELESTGTTPAGNALERAARGNPESGNPQEHGRHTSPASPHRPWWERHGPSSNVEALEKASILTSSFTAEDDRGGSVIKYEENARRQWVREPPEALLSMLKDADLSQAFQTYTIYRPGAEGFLKGPLSEDTASDSVDGDLDSVMLDPERFEPRLDEEDTDFEEDNENPDWVSELKKHVGYGDGPGGQLLGERA.

Met-1 is modified (N-acetylmethionine). Residues 1–282 (MDNYTVLRVI…EQILDEIKIS (282 aa)) are interaction with VAV2. The Protein kinase domain maps to 4 to 255 (YTVLRVIGQG…ATTLLCRGSL (252 aa)). Residues 10–18 (IGQGSFGRA) and Lys-33 each bind ATP. Residue Asp-125 is the Proton acceptor of the active site. Position 159 is a phosphothreonine; by autocatalysis (Thr-159). 2 disordered regions span residues 299 to 370 (LGEA…GPSS) and 443 to 511 (GPLS…GERA). A compositionally biased stretch (basic and acidic residues) spans 309–321 (EEERGRKCSHTEL). The span at 472–485 (LDEEDTDFEEDNEN) shows a compositional bias: acidic residues. Thr-477 carries the post-translational modification Phosphothreonine. Residues 498-511 (YGDGPGGQLLGERA) are compositionally biased toward gly residues.

Belongs to the protein kinase superfamily. NEK Ser/Thr protein kinase family. NIMA subfamily. As to quaternary structure, interacts with PXN, PRLR, VAV1 and VAV2 and this interaction is prolactin-dependent. Mg(2+) is required as a cofactor. In terms of processing, phosphorylation at Thr-477 regulates its catalytic activity. In terms of tissue distribution, brain.

It is found in the cytoplasm. The protein resides in the cell projection. The protein localises to the axon. It catalyses the reaction L-seryl-[protein] + ATP = O-phospho-L-seryl-[protein] + ADP + H(+). The enzyme catalyses L-threonyl-[protein] + ATP = O-phospho-L-threonyl-[protein] + ADP + H(+). Functionally, protein kinase which influences neuronal morphogenesis and polarity through effects on microtubules. Regulates microtubule acetylation in neurons. Contributes to prolactin-mediated phosphorylation of PXN and VAV2. This Mus musculus (Mouse) protein is Serine/threonine-protein kinase Nek3 (Nek3).